A 506-amino-acid chain; its full sequence is Nondiscriminating glutamyl-tRNA synthetase EARS2, mitochondrial (506 aa).

A mitochondrion-targeting transit peptide spans 1–41; that stretch reads MAALLRRLLQRGRPLAASGRRVGRREARLGTGPGVAVRVRF. Residue 40-42 participates in L-glutamate binding; that stretch reads RFA. Residues 45–53 carry the 'HIGH' region motif; that stretch reads PTGFLHLGG. Position 50 (histidine 50) interacts with ATP. Residues glutamate 76, 228–232, and arginine 246 contribute to the L-glutamate site; that span reads YHLAC. Position 249 (glutamate 249) interacts with ATP. The residue at position 256 (lysine 256) is an N6-succinyllysine. Residue 284–288 coordinates ATP; that stretch reads KLSKR. A 'KMSKS' region motif is present at residues 284–288; it reads KLSKR. The residue at position 486 (lysine 486) is an N6-acetyllysine.

Belongs to the class-I aminoacyl-tRNA synthetase family. Glutamate--tRNA ligase type 1 subfamily.

It localises to the mitochondrion matrix. The enzyme catalyses tRNA(Glx) + L-glutamate + ATP = L-glutamyl-tRNA(Glx) + AMP + diphosphate. The catalysed reaction is tRNA(Glu) + L-glutamate + ATP = L-glutamyl-tRNA(Glu) + AMP + diphosphate. It catalyses the reaction tRNA(Gln) + L-glutamate + ATP = L-glutamyl-tRNA(Gln) + AMP + diphosphate. Functionally, non-discriminating glutamyl-tRNA synthetase that catalyzes aminoacylation of both mitochondrial tRNA(Glu) and tRNA(Gln) and participates in RNA aminoacylation for mitochondrial protein translation. Attachs glutamate to tRNA(Glu) or tRNA(Gln) in a two-step reaction: glutamate is first activated by ATP to form Glu-AMP and then transferred to the acceptor end of tRNA(Glu) or tRNA(Gln). In vitro, cytoplasmic tRNA(Gln) is slightly glutamylated, but with low activity. This Macaca fascicularis (Crab-eating macaque) protein is Nondiscriminating glutamyl-tRNA synthetase EARS2, mitochondrial.